Reading from the N-terminus, the 205-residue chain is Glycerol-3-phosphate acyltransferase (205 aa).

5 helical membrane-spanning segments follow: residues 4-24, 80-100, 107-127, 130-150, and 155-175; these read IAPGLVLLAYLCGSISSAILV, PFWLGLVAIAACVGHIWPVFF, GVATAFGAIAPIGLDLTGVMA, WLLTILLSGYSSLGAIVSALI, and VWWFKPQYTFPVSMLSCLILL.

The protein belongs to the PlsY family. As to quaternary structure, probably interacts with PlsX.

The protein localises to the cell inner membrane. It catalyses the reaction an acyl phosphate + sn-glycerol 3-phosphate = a 1-acyl-sn-glycero-3-phosphate + phosphate. Its pathway is lipid metabolism; phospholipid metabolism. Functionally, catalyzes the transfer of an acyl group from acyl-phosphate (acyl-PO(4)) to glycerol-3-phosphate (G3P) to form lysophosphatidic acid (LPA). This enzyme utilizes acyl-phosphate as fatty acyl donor, but not acyl-CoA or acyl-ACP. The protein is Glycerol-3-phosphate acyltransferase of Klebsiella pneumoniae (strain 342).